The sequence spans 277 residues: Proteasome subunit beta type-7 (277 aa).

Positions 1–43 (MAAVSVFQAPVGGFSFDNCRRNAVLEADFAKKGFKLPKARKTG) are cleaved as a propeptide — removed in mature form. T44 (nucleophile) is an active-site residue.

It belongs to the peptidase T1B family. As to quaternary structure, the 26S proteasome consists of a 20S proteasome core and two 19S regulatory subunits. The 20S proteasome core is a barrel-shaped complex made of 28 subunits that are arranged in four stacked rings. The two outer rings are each formed by seven alpha subunits, and the two inner rings are formed by seven beta subunits. The proteolytic activity is exerted by three beta-subunits PSMB5, PSMB6 and PSMB7.

The protein resides in the cytoplasm. The protein localises to the nucleus. The enzyme catalyses Cleavage of peptide bonds with very broad specificity.. Its function is as follows. Component of the 20S core proteasome complex involved in the proteolytic degradation of most intracellular proteins. This complex plays numerous essential roles within the cell by associating with different regulatory particles. Associated with two 19S regulatory particles, forms the 26S proteasome and thus participates in the ATP-dependent degradation of ubiquitinated proteins. The 26S proteasome plays a key role in the maintenance of protein homeostasis by removing misfolded or damaged proteins that could impair cellular functions, and by removing proteins whose functions are no longer required. Associated with the PA200 or PA28, the 20S proteasome mediates ubiquitin-independent protein degradation. This type of proteolysis is required in several pathways including spermatogenesis (20S-PA200 complex) or generation of a subset of MHC class I-presented antigenic peptides (20S-PA28 complex). Within the 20S core complex, PSMB7 displays a trypsin-like activity. In Rattus norvegicus (Rat), this protein is Proteasome subunit beta type-7 (Psmb7).